The primary structure comprises 118 residues: Small ribosomal subunit protein uS13 (118 aa).

A disordered region spans residues 92–118; sequence RRGLPVRGQRTKTNARTRKGPRKPIKK.

Belongs to the universal ribosomal protein uS13 family. In terms of assembly, part of the 30S ribosomal subunit. Forms a loose heterodimer with protein S19. Forms two bridges to the 50S subunit in the 70S ribosome.

Its function is as follows. Located at the top of the head of the 30S subunit, it contacts several helices of the 16S rRNA. In the 70S ribosome it contacts the 23S rRNA (bridge B1a) and protein L5 of the 50S subunit (bridge B1b), connecting the 2 subunits; these bridges are implicated in subunit movement. Contacts the tRNAs in the A and P-sites. The polypeptide is Small ribosomal subunit protein uS13 (Yersinia enterocolitica serotype O:8 / biotype 1B (strain NCTC 13174 / 8081)).